Consider the following 349-residue polypeptide: N-acetyl-gamma-glutamyl-phosphate reductase (349 aa).

Cysteine 153 is an active-site residue.

It belongs to the NAGSA dehydrogenase family. Type 1 subfamily.

The protein localises to the cytoplasm. It catalyses the reaction N-acetyl-L-glutamate 5-semialdehyde + phosphate + NADP(+) = N-acetyl-L-glutamyl 5-phosphate + NADPH + H(+). Its pathway is amino-acid biosynthesis; L-arginine biosynthesis; N(2)-acetyl-L-ornithine from L-glutamate: step 3/4. Its function is as follows. Catalyzes the NADPH-dependent reduction of N-acetyl-5-glutamyl phosphate to yield N-acetyl-L-glutamate 5-semialdehyde. In Magnetococcus marinus (strain ATCC BAA-1437 / JCM 17883 / MC-1), this protein is N-acetyl-gamma-glutamyl-phosphate reductase.